The sequence spans 226 residues: Gap junction beta-2 protein (226 aa).

The stretch at 2–13 (DWGALQTILGGV) is an intramembrane region. The Cytoplasmic segment spans residues 14 to 20 (NKHSTSI). A helical membrane pass occupies residues 21–40 (GKIWLTVLFIFRIMILVVAA). At 41–73 (KEVWGDEQADFVCNTLQPGCKNVCYDHYFPISH) the chain is on the extracellular side. Ca(2+) is bound by residues glutamate 42, glycine 45, and glutamate 47. Intrachain disulfides connect cysteine 53–cysteine 180, cysteine 60–cysteine 174, and cysteine 64–cysteine 169. Residues 74 to 94 (IRLWALQLIFVSTPALLVAMH) form a helical membrane-spanning segment. Residues 95-135 (VAYRRHEKKRKFIKGEIKSEFKDIEEIKTQKVRIEGSLWWT) lie on the Cytoplasmic side of the membrane. Residues 136-156 (YTSSIFFRVIFEAAFMYVFYV) traverse the membrane as a helical segment. The Extracellular portion of the chain corresponds to 157–189 (MYDGFSMQRLVKCNAWPCPNTVDCFVSRPTEKT). A helical membrane pass occupies residues 190 to 210 (VFTVFMIAVSGICILLNVTEL). At 211-226 (CYLLIRYCSGRSKKPV) the chain is on the cytoplasmic side.

This sequence belongs to the connexin family. Beta-type (group I) subfamily. A hemichannel or connexon is composed of a hexamer of connexins. A functional gap junction is formed by the apposition of two hemichannels. Forms heteromeric channels with GJB4. Interacts with CNST.

Its subcellular location is the cell membrane. It localises to the cell junction. It is found in the gap junction. Functionally, structural component of gap junctions. Gap junctions are dodecameric channels that connect the cytoplasm of adjoining cells. They are formed by the docking of two hexameric hemichannels, one from each cell membrane. Small molecules and ions diffuse from one cell to a neighboring cell via the central pore. The protein is Gap junction beta-2 protein (GJB2) of Pongo pygmaeus (Bornean orangutan).